We begin with the raw amino-acid sequence, 511 residues long: Early growth response protein 1 (511 aa).

2 disordered regions span residues 133–169 (ASIP…LSCS) and 291–312 (PSRM…RPYA). Residues 137–169 (SSTSQATHPSSSSTSSIPSSSSSSTSSASLSCS) are compositionally biased toward low complexity. C2H2-type zinc fingers lie at residues 311 to 335 (YACP…IRIH), 341 to 363 (FQCR…IRTH), and 369 to 391 (FACE…TKIH). Positions 384–406 (RKRHTKIHMRQKDKKAEKGATAA) are disordered. Over residues 386–396 (RHTKIHMRQKD) the composition is skewed to basic residues.

This sequence belongs to the EGR C2H2-type zinc-finger protein family. In terms of tissue distribution, detected in muscle and brain.

It is found in the nucleus. The protein localises to the cytoplasm. In terms of biological role, transcriptional regulator. Recognizes and binds to the DNA sequence 5'-GCG(T/G)GGGCG-3'(EGR-site) in the promoter region of target genes. Binds double-stranded target DNA, irrespective of the cytosine methylation status. Regulates the transcription of numerous target genes, and thereby plays an important role in regulating the response to growth factors, DNA damage, and ischemia. Plays a role in the regulation of cell survival, proliferation and cell death. Mediates responses to ischemia and hypoxia; regulates the expression of proteins that are involved in inflammatory processes. Plays a role in regulating the expression of circadian clock genes. Plays a role in the organization of Muller glia cells in the inner and outer plexiform layers of the retina. This Danio rerio (Zebrafish) protein is Early growth response protein 1 (egr1).